Here is a 308-residue protein sequence, read N- to C-terminus: D-alanine--D-alanine ligase (308 aa).

Residues 109-302 (KAAYAAAGLP…FGALCRWIVE (194 aa)) form the ATP-grasp domain. Residue 136–186 (MPPPYVIKPYNEGSSVGVYLVPEGAEAAPELADDLPDTLMVEAFVPGRELT) coordinates ATP. Mg(2+) is bound by residues Asp-253, Glu-269, and Asn-271.

The protein belongs to the D-alanine--D-alanine ligase family. Requires Mg(2+) as cofactor. It depends on Mn(2+) as a cofactor.

It localises to the cytoplasm. The enzyme catalyses 2 D-alanine + ATP = D-alanyl-D-alanine + ADP + phosphate + H(+). It functions in the pathway cell wall biogenesis; peptidoglycan biosynthesis. Functionally, cell wall formation. The protein is D-alanine--D-alanine ligase of Dinoroseobacter shibae (strain DSM 16493 / NCIMB 14021 / DFL 12).